The following is a 513-amino-acid chain: MEISWGRALWRNFLGQSPDWYKLALIIFLIVNPLIFLISPFVAGWLLVAEFIFTLAMALKCYPLLPGGLLAIEAVFIGMTSAEHVREEVAANLEVLLLLMFMVAGIYFMKQLLLFIFTRLLLSIRSKMLLSLSFCVAAAFLSAFLDALTVVAVVISVAVGFYGIYHRVASSRAEDTDLQDDSHIDKHYKVVLEQFRGFLRSLMMHAGVGTALGGVMTMVGEPQNLIIAKAAGWHFGDFFLRMSPVTVPVLICGLLTCLLVEKLRWFGYGETLPEKVREVLQQFDDQSRLQRTRQDKIRLIVQAIIGVWLVTALALHLAEVGLIGLSVIILATSLTGVTDEHAIGKAFTESLPFTALLTVFFSVVAVIIDQQLFSPIIQFVLQASEHAQLSLFYIFNGLLSSISDNVFVGTIYINEAKAAMESGAITLKQYELLAVAINTGTNLPSVATPNGQAAFLFLLTSALAPLIRLSYGRMVWMALPYTLVLTVAGLLCVEFTLAPVTEWFMQMGWIATL.

Transmembrane regions (helical) follow at residues 23–43, 52–72, 97–117, 120–140, 144–164, 202–222, 238–258, 303–323, 348–368, 391–411, 447–467, and 475–495; these read LALIIFLIVNPLIFLISPFVA, IFTLAMALKCYPLLPGGLLAI, LLLMFMVAGIYFMKQLLLFIF, LLLSIRSKMLLSLSFCVAAAF, FLDALTVVAVVISVAVGFYGI, LMMHAGVGTALGGVMTMVGEP, FFLRMSPVTVPVLICGLLTCL, AIIGVWLVTALALHLAEVGLI, TESLPFTALLTVFFSVVAVII, LFYIFNGLLSSISDNVFVGTI, ATPNGQAAFLFLLTSALAPLI, and VWMALPYTLVLTVAGLLCVEF.

The protein belongs to the NhaB Na(+)/H(+) (TC 2.A.34) antiporter family.

The protein localises to the cell inner membrane. The catalysed reaction is 2 Na(+)(in) + 3 H(+)(out) = 2 Na(+)(out) + 3 H(+)(in). Functionally, na(+)/H(+) antiporter that extrudes sodium in exchange for external protons. The chain is Na(+)/H(+) antiporter NhaB from Escherichia coli O127:H6 (strain E2348/69 / EPEC).